The sequence spans 355 residues: Guanine nucleotide-binding protein G(i) subunit alpha (355 aa).

A lipid anchor (N-myristoyl glycine) is attached at glycine 2. The S-palmitoyl cysteine moiety is linked to residue cysteine 3. Positions 33–355 (REVKLLLLGA…KNNLKDCGLF (323 aa)) constitute a G-alpha domain. Residues 36 to 49 (KLLLLGAGESGKST) form a G1 motif region. GTP-binding positions include 41-48 (GAGESGKS), 176-182 (LRTRVKT), 201-205 (DVGGQ), 270-273 (NKKD), and alanine 327. Residues serine 48 and threonine 182 each contribute to the Mg(2+) site. Residues 174 to 182 (DVLRTRVKT) form a G2 motif region. The segment at 197 to 206 (FKLFDVGGQR) is G3 motif. The interval 266–273 (ILFLNKKD) is G4 motif. Positions 325-330 (TCATDT) are G5 motif.

Belongs to the G-alpha family. G(i/o/t/z) subfamily. As to quaternary structure, g proteins are composed of 3 units; alpha, beta and gamma. The alpha chain contains the guanine nucleotide binding site.

In terms of biological role, guanine nucleotide-binding proteins (G proteins) are involved as modulators or transducers in various transmembrane signaling systems. The protein is Guanine nucleotide-binding protein G(i) subunit alpha of Homarus americanus (American lobster).